Consider the following 436-residue polypeptide: Glutamyl-tRNA reductase (436 aa).

Substrate contacts are provided by residues 49–52, Ser109, 114–116, and Gln120; these read TCNR and EGQ. Residue Cys50 is the Nucleophile of the active site. 198–203 contacts NADP(+); the sequence is GAGRMS.

This sequence belongs to the glutamyl-tRNA reductase family. In terms of assembly, homodimer.

It catalyses the reaction (S)-4-amino-5-oxopentanoate + tRNA(Glu) + NADP(+) = L-glutamyl-tRNA(Glu) + NADPH + H(+). Its pathway is porphyrin-containing compound metabolism; protoporphyrin-IX biosynthesis; 5-aminolevulinate from L-glutamyl-tRNA(Glu): step 1/2. It participates in porphyrin-containing compound metabolism; chlorophyll biosynthesis. Functionally, catalyzes the NADPH-dependent reduction of glutamyl-tRNA(Glu) to glutamate 1-semialdehyde (GSA). This chain is Glutamyl-tRNA reductase, found in Prochlorococcus marinus (strain AS9601).